The following is a 134-amino-acid chain: Phosphoribosyl-AMP cyclohydrolase (134 aa).

Position 80 (D80) interacts with Mg(2+). C81 contributes to the Zn(2+) binding site. Residues D82 and D84 each coordinate Mg(2+). Zn(2+) contacts are provided by C98 and C105.

It belongs to the PRA-CH family. In terms of assembly, homodimer. Mg(2+) serves as cofactor. Zn(2+) is required as a cofactor.

It is found in the cytoplasm. The enzyme catalyses 1-(5-phospho-beta-D-ribosyl)-5'-AMP + H2O = 1-(5-phospho-beta-D-ribosyl)-5-[(5-phospho-beta-D-ribosylamino)methylideneamino]imidazole-4-carboxamide. The protein operates within amino-acid biosynthesis; L-histidine biosynthesis; L-histidine from 5-phospho-alpha-D-ribose 1-diphosphate: step 3/9. Catalyzes the hydrolysis of the adenine ring of phosphoribosyl-AMP. This Bordetella bronchiseptica (strain ATCC BAA-588 / NCTC 13252 / RB50) (Alcaligenes bronchisepticus) protein is Phosphoribosyl-AMP cyclohydrolase.